A 255-amino-acid polypeptide reads, in one-letter code: NADH dehydrogenase [ubiquinone] flavoprotein 2, mitochondrial (255 aa).

A mitochondrion-targeting transit peptide spans 1-35 (MLARLAAKRLLEIRQVFRQPTSQVTRSLSTALNYH). [2Fe-2S] cluster contacts are provided by C130, C135, C171, and C175. Residues 214 to 255 (RKGEKPPHGTQNPKRIKCGPEGGNKTLLGEPKPPQFRDLDAC) form a disordered region.

The protein belongs to the complex I 24 kDa subunit family. Complex I is composed of at least 49 different subunits. This is a component of the flavoprotein-sulfur (FP) fragment of the enzyme. Requires [2Fe-2S] cluster as cofactor.

It localises to the mitochondrion inner membrane. It carries out the reaction a ubiquinone + NADH + 5 H(+)(in) = a ubiquinol + NAD(+) + 4 H(+)(out). Functionally, core subunit of the mitochondrial membrane respiratory chain NADH dehydrogenase (Complex I) that is believed to belong to the minimal assembly required for catalysis. Complex I functions in the transfer of electrons from NADH to the respiratory chain. The immediate electron acceptor for the enzyme is believed to be ubiquinone. The sequence is that of NADH dehydrogenase [ubiquinone] flavoprotein 2, mitochondrial from Arabidopsis thaliana (Mouse-ear cress).